The chain runs to 710 residues: Exocyst complex component 5 (710 aa).

Residues 44–96 are a coiled coil; sequence DTFIQTIKDLKILQEKQQSKCERLEESLRQEKESHAKKIAKLQERHQTAIDVF.

It belongs to the SEC10 family. The exocyst complex is composed of Sec3/Exoc1, Sec5/Exoc2, Sec6/Exoc3, Sec8/Exoc4, Sec10/Exoc5, Sec15/Exoc6, Exo70/Exoc7 and Exo84/Exoc8.

Its function is as follows. Component of the exocyst complex involved in the docking of exocytic vesicles with fusion sites on the plasma membrane. This chain is Exocyst complex component 5, found in Drosophila melanogaster (Fruit fly).